The chain runs to 289 residues: Sphingomyelinase D (289 aa).

The signal sequence occupies residues 1–22; it reads MQSISVLICVLLALSILNFTVA. His-34 is an active-site residue. Mg(2+)-binding residues include Glu-54, Asp-56, and Asp-103. The short motif at 282–289 is the SMD-tail element; it reads ATEDDAPW.

It belongs to the sphingomyelinase D/phospholipase D family. The cofactor is Mg(2+).

The protein localises to the secreted. It carries out the reaction a sphingomyelin + H2O = an N-acylsphing-4-enine 1-phosphate + choline + H(+). With respect to regulation, sphingomyelinase activity is reduced by 33 percent following addition of EDTA. In terms of biological role, catalyzes the hydrolysis of sphingomyelin. Sphingomyelinases D are produced by some spider in their venoms, but also by arthropods such as ticks, or pathogenic bacteria and fungi. They might play a role in pathogenicity through different mechanisms, such as membrane destabilization and host cell penetration, but also pulmonary inflammation and cutaneous lesions. In Aspergillus flavus (strain ATCC 200026 / FGSC A1120 / IAM 13836 / NRRL 3357 / JCM 12722 / SRRC 167), this protein is Sphingomyelinase D.